Consider the following 487-residue polypeptide: NADH-quinone oxidoreductase subunit N (487 aa).

The next 13 membrane-spanning stretches (helical) occupy residues 9–29 (PVLPEIFMAVAGLALLMLGVF), 38–58 (VSVLVILALGAAMVLVSSLGG), 73–93 (FAGFAKGLVLVASAIATAMSL), 108–128 (VLVLFATLGMMMMISANDFIA), 161–181 (FVLGSLASGLLLYGISLLYGF), 208–228 (IIAGLVFVLAGLSFKVSAVPF), 240–260 (PTPVTSFFAVAPKIAALCLLV), 277–297 (VVTFIAIGSMFVGSFAAVVQT), 306–326 (SSIGHVGFVLVGIAAGSTLGI), 328–348 (GVLIYLAIYLFMNVGAFAVIL), 374–394 (AFVMAVLMFSMAGVPPLAGFW), 408–430 (LYTLSILGVLSSVVSTYYYLRIV), and 452–472 (LVMAVSTIVILAFTLIPAPLV).

The protein belongs to the complex I subunit 2 family. As to quaternary structure, NDH-1 is composed of 14 different subunits. Subunits NuoA, H, J, K, L, M, N constitute the membrane sector of the complex.

The protein localises to the cell inner membrane. The catalysed reaction is a quinone + NADH + 5 H(+)(in) = a quinol + NAD(+) + 4 H(+)(out). Functionally, NDH-1 shuttles electrons from NADH, via FMN and iron-sulfur (Fe-S) centers, to quinones in the respiratory chain. The immediate electron acceptor for the enzyme in this species is believed to be ubiquinone. Couples the redox reaction to proton translocation (for every two electrons transferred, four hydrogen ions are translocated across the cytoplasmic membrane), and thus conserves the redox energy in a proton gradient. This chain is NADH-quinone oxidoreductase subunit N, found in Paramagnetospirillum magneticum (strain ATCC 700264 / AMB-1) (Magnetospirillum magneticum).